Here is a 143-residue protein sequence, read N- to C-terminus: MAIERTFSIIKPDAVAKNHIGAIYNRFETAGLKIIASKMVHLSKEQAEGFYAEHSERPFFGALVEFMTSGPIMVQVLEGENAVLANREIMGATNPAEAARGTLRADFADSIDENAVHGSDAVASAEREIAYFFSAEELCPRTR.

ATP-binding residues include Lys11, Phe59, Arg87, Thr93, Arg104, and Asn114. Catalysis depends on His117, which acts as the Pros-phosphohistidine intermediate.

Belongs to the NDK family. Homotetramer. Requires Mg(2+) as cofactor.

The protein localises to the cytoplasm. It catalyses the reaction a 2'-deoxyribonucleoside 5'-diphosphate + ATP = a 2'-deoxyribonucleoside 5'-triphosphate + ADP. The enzyme catalyses a ribonucleoside 5'-diphosphate + ATP = a ribonucleoside 5'-triphosphate + ADP. In terms of biological role, major role in the synthesis of nucleoside triphosphates other than ATP. The ATP gamma phosphate is transferred to the NDP beta phosphate via a ping-pong mechanism, using a phosphorylated active-site intermediate. This Shewanella loihica (strain ATCC BAA-1088 / PV-4) protein is Nucleoside diphosphate kinase.